We begin with the raw amino-acid sequence, 611 residues long: 1,4-alpha-glucan branching enzyme GlgB (611 aa).

The Nucleophile role is filled by D302. The active-site Proton donor is E343.

This sequence belongs to the glycosyl hydrolase 13 family. GlgB subfamily. Monomer.

The enzyme catalyses Transfers a segment of a (1-&gt;4)-alpha-D-glucan chain to a primary hydroxy group in a similar glucan chain.. Its pathway is glycan biosynthesis; glycogen biosynthesis. Catalyzes the formation of the alpha-1,6-glucosidic linkages in glycogen by scission of a 1,4-alpha-linked oligosaccharide from growing alpha-1,4-glucan chains and the subsequent attachment of the oligosaccharide to the alpha-1,6 position. This is 1,4-alpha-glucan branching enzyme GlgB from Fusobacterium nucleatum subsp. nucleatum (strain ATCC 25586 / DSM 15643 / BCRC 10681 / CIP 101130 / JCM 8532 / KCTC 2640 / LMG 13131 / VPI 4355).